The primary structure comprises 103 residues: uncharacterized protein (103 aa).

Residues 38-51 (TTTTSSTTSASTTS) show a composition bias toward low complexity. The disordered stretch occupies residues 38 to 70 (TTTTSSTTSASTTSQPSFSLPTSCNSNSPQSNL). Residues 52 to 70 (QPSFSLPTSCNSNSPQSNL) show a composition bias toward polar residues.

This is an uncharacterized protein from Dictyostelium discoideum (Social amoeba).